A 696-amino-acid polypeptide reads, in one-letter code: Polyribonucleotide nucleotidyltransferase (696 aa).

Residues D483 and D489 each coordinate Mg(2+). Residues 550-609 enclose the KH domain; that stretch reads PRITTIWVKVDKIRDVIGSGGKNIRSVTEATGVSIDIDDTGKINIASTNKEACDLAIKMI. An S1 motif domain is found at 619–687; the sequence is GKLYMGTVKK…KQGKIKLSRK (69 aa).

It belongs to the polyribonucleotide nucleotidyltransferase family. Requires Mg(2+) as cofactor.

The protein localises to the cytoplasm. The enzyme catalyses RNA(n+1) + phosphate = RNA(n) + a ribonucleoside 5'-diphosphate. Involved in mRNA degradation. Catalyzes the phosphorolysis of single-stranded polyribonucleotides processively in the 3'- to 5'-direction. This is Polyribonucleotide nucleotidyltransferase from Geobacter sp. (strain M21).